Consider the following 250-residue polypeptide: 5-oxoprolinase subunit A (250 aa).

It belongs to the LamB/PxpA family. As to quaternary structure, forms a complex composed of PxpA, PxpB and PxpC.

It catalyses the reaction 5-oxo-L-proline + ATP + 2 H2O = L-glutamate + ADP + phosphate + H(+). In terms of biological role, catalyzes the cleavage of 5-oxoproline to form L-glutamate coupled to the hydrolysis of ATP to ADP and inorganic phosphate. This Staphylococcus aureus (strain bovine RF122 / ET3-1) protein is 5-oxoprolinase subunit A.